We begin with the raw amino-acid sequence, 437 residues long: UDP-N-acetylmuramate--L-alanine ligase (437 aa).

108–114 (GAHGKTS) contributes to the ATP binding site.

This sequence belongs to the MurCDEF family.

It is found in the cytoplasm. It carries out the reaction UDP-N-acetyl-alpha-D-muramate + L-alanine + ATP = UDP-N-acetyl-alpha-D-muramoyl-L-alanine + ADP + phosphate + H(+). It functions in the pathway cell wall biogenesis; peptidoglycan biosynthesis. Functionally, cell wall formation. This is UDP-N-acetylmuramate--L-alanine ligase from Staphylococcus aureus (strain JH9).